The chain runs to 119 residues: Enhancer of yellow 2 transcription factor (119 aa).

The interval 93-119 (LTENETEGTDNHDDDEDDEDENGTEDN) is disordered. The segment covering 96 to 119 (NETEGTDNHDDDEDDEDENGTEDN) has biased composition (acidic residues).

The protein belongs to the ENY2 family. In terms of assembly, component of the nuclear pore complex (NPC)-associated AMEX complex (anchoring and mRNA export complex), composed of at least e(y)2 and xmas-2. Component of the SAGA transcription coactivator-HAT complexes, at least composed of Ada2b, e(y)2, Pcaf/Gcn5, Taf10 and Nipped-A/Trrap. Within the SAGA complex, e(y)2, Sgf11, and not/nonstop form an additional subcomplex of SAGA called the DUB module (deubiquitination module). Component of the THO complex, composed of at least e(y)2, HPR1, THO2, THOC5, THOC6 and THOC7. Interacts with e(y)1. Interacts with su(Hw) (via zinc fingers). Interacts with xmas-2; required for localization to the nuclear periphery. Interacts with the nuclear pore complex (NPC).

The protein localises to the nucleus. It is found in the nucleoplasm. It localises to the cytoplasm. Functionally, involved in mRNA export coupled transcription activation by association with both the AMEX and the SAGA complexes. The SAGA complex is a multiprotein complex that activates transcription by remodeling chromatin and mediating histone acetylation and deubiquitination. Within the SAGA complex, participates in a subcomplex that specifically deubiquitinates histone H2B. The SAGA complex is recruited to specific gene promoters by activators, where it is required for transcription. Required for nuclear receptor-mediated transactivation. Involved in transcription elongation by recruiting the THO complex onto nascent mRNA. The AMEX complex functions in docking export-competent ribonucleoprotein particles (mRNPs) to the nuclear entrance of the nuclear pore complex (nuclear basket). AMEX participates in mRNA export and accurate chromatin positioning in the nucleus by tethering genes to the nuclear periphery. This Drosophila willistoni (Fruit fly) protein is Enhancer of yellow 2 transcription factor.